A 435-amino-acid chain; its full sequence is Histidine--tRNA ligase (435 aa).

The tract at residues serine 415–glutamate 435 is disordered. Residues aspartate 424–glutamate 435 show a composition bias toward basic and acidic residues.

This sequence belongs to the class-II aminoacyl-tRNA synthetase family.

The protein localises to the cytoplasm. It catalyses the reaction tRNA(His) + L-histidine + ATP = L-histidyl-tRNA(His) + AMP + diphosphate + H(+). The sequence is that of Histidine--tRNA ligase from Haloarcula marismortui (strain ATCC 43049 / DSM 3752 / JCM 8966 / VKM B-1809) (Halobacterium marismortui).